Here is a 265-residue protein sequence, read N- to C-terminus: MFQIRSFLVGISAFVMAVLGSAAYSAQPGGEYPTVDDIPVGEVRLYKIGDGVWSHIATQKLGDTVYSSNGLIVRDADELLLIDTAWGAKNTVALLAEIEKQIGLPVTRSISTHFHDDRVGGVDVLRAAGVATYTSPLTRQLAEAAGNEVPAHSLKALSSSGDVVRFGPVEVFYPGAAHSGDNLVVYVPAVRVLFGGCAVHEASRESAGNVADANLAEWPATIKRIQQRYPEAEVVIPGHGLPGGLELLQHTTNVVKTHKVRPVAE.

The signal sequence occupies residues 1–17 (MFQIRSFLVGISAFVMA). 6 residues coordinate Zn(2+): His113, His115, Asp117, His178, Cys197, and His239.

The protein belongs to the metallo-beta-lactamase superfamily. Class-B beta-lactamase family. Monomer. Zn(2+) serves as cofactor.

It is found in the periplasm. It catalyses the reaction a beta-lactam + H2O = a substituted beta-amino acid. In terms of biological role, class B beta-lactamase which confers resistance to the beta-lactam antibiotics, including penicillins, cephalosporins and carbapenems. Acts via hydrolysis of the beta-lactam ring. Has penicillin-, cephalosporin- and carbapenem-hydrolyzing activities. The sequence is that of Metallo-beta-lactamase VIM-7 from Pseudomonas aeruginosa.